The sequence spans 150 residues: UPF0260 protein PputGB1_4117 (150 aa).

It belongs to the UPF0260 family.

The protein is UPF0260 protein PputGB1_4117 of Pseudomonas putida (strain GB-1).